The primary structure comprises 502 residues: Maturase K (502 aa).

It belongs to the intron maturase 2 family. MatK subfamily.

The protein localises to the plastid. It localises to the chloroplast. Its function is as follows. Usually encoded in the trnK tRNA gene intron. Probably assists in splicing its own and other chloroplast group II introns. This Ipomoea purpurea (Common morning glory) protein is Maturase K.